A 69-amino-acid polypeptide reads, in one-letter code: Conopeptide Y-Pl1 (69 aa).

An N-terminal signal peptide occupies residues 1 to 20; the sequence is MSKLGVVLFVFLLLLPLAAP. A propeptide spanning residues 21 to 69 is cleaved from the precursor; that stretch reads QPVGDQPADQPADRNAEARARFLHPFQYYTLYRYLTRFLHRYPIYYIRY.

The protein belongs to the conotoxin M superfamily. Conopeptide Y family. As to expression, expressed by the venom duct.

It localises to the secreted. Tyrosine-rich conopeptide that targets several channels/receptors that are expressed in Xenopus oocytes. These targets are the voltage-gated potassium channels Kv1.6/KCNA6 (IC(50) is 170 nM) and Kv1.2/KCNA2 (IC(50) is 2.0 uM), Nav1.2/SCN2A (30% of inhibition), and N-methyl-D-aspartate (NMDA) receptor (GRIN1/GRIN2A/GRIN3B and GRIN1/GRIN2B/GRIN3B) (15% of inhibition). In vivo, causes the marine worm N.virens to move very slowly in contrast to control worms, and causes seizures (at 5 nmol) and death (20 nmol) to mice when intracranially injected. This Conus planorbis (Planorbis cone) protein is Conopeptide Y-Pl1.